The primary structure comprises 981 residues: MAADSEPESEVFEITDFTTASEWERFISKVEEVLNDWKLIGNSLGKPLEKGIFTSGTWEEKSDEISFADFKFSVTHHYLVQESTDKEGKDELLEDVVPQSMQDLLGMNNDFPPRAHCLVRWYGLREFVVIAPAAHSDAVLSESKCNLLLSSVSIALGNTGCQVPLFVQIHHKWRRMYVGECQGPGVRTDFEMVHLRKVPNQYTHLSGLLDIFKSKIGCPLTPLPPVSIAIRFTYVLQDWQQYFWPQQPPDIDALVGGEVGGLEFGKLPFGACEDPISELHLATTWPHLTEGIIVDNDVYSDLDPIQAPHWSVRVRKAENPQCLLGDFVTEFFKICRRKESTDEILGRSAFEEEGKETADITHALSKLTEPASVPIHKLSVSNMVHTAKKKIRKHRGVEESPLNNDVLNTILLFLFPDAVSEKPLDGTTSTDNNNPPSESEDYNLYNQFKSAPSDSLTYKLALCLCMINFYHGGLKGVAHLWQEFVLEMRFRWENNFLIPGLASGPPDLRCCLLHQKLQMLNCCIERKKARDEGKKTSASDVTNIYPGDAGKAGDQLVPDNLKETDKEKGEVGKSWDSWSDSEEEFFECLSDTEELKGNGQESGKKGGPKEMANLRPEGRLYQHGKLTLLHNGEPLYIPVTQEPAPMTEDLLEEQSEVLAKLGTSAEGAHLRARMQSACLLSDMESFKAANPGCSLEDFVRWYSPRDYIEEEVIDEKGNVVLKGELSARMKIPSNMWVEAWETAKPIPARRQRRLFDDTREAEKVLHYLAIQKPADLARHLLPCVIHAAVLKVKEEESLENISSVKKIIKQIISHSSKVLHFPNPEDKKLEEIIHQITNVEALIARARSLKAKFGTEKCEQEEEKEDLERFVSCLLEQPEVLVTGAGRGHAGRIIHKLFVNAQRAAAMTPPEEELKRMGSPEERRQNSVSDFPPPAGREFILRTTVPRPAPYSKALPQRMYSVLTKEDFRLAGAFSSDTSFF.

A phosphoserine mark is found at Ser-83, Ser-379, Ser-537, Ser-579, Ser-581, and Ser-590. The interval 592-613 (TEELKGNGQESGKKGGPKEMAN) is disordered. Ser-664 is subject to Phosphoserine. Residue Thr-908 is modified to Phosphothreonine. A disordered region spans residues 908–937 (TPPEEELKRMGSPEERRQNSVSDFPPPAGR). A compositionally biased stretch (basic and acidic residues) spans 912 to 925 (EELKRMGSPEERRQ).

This sequence belongs to the Rab3-GAP catalytic subunit family. In terms of assembly, the Rab3 GTPase-activating complex is a heterodimer composed of RAB3GAP1 and RAB3GAP2. The Rab3 GTPase-activating complex interacts with DMXL2. Interacts with LMAN1. Ubiquitous.

The protein localises to the cytoplasm. Its subcellular location is the endoplasmic reticulum. The protein resides in the golgi apparatus. It is found in the cis-Golgi network. Its function is as follows. Catalytic subunit of the Rab3 GTPase-activating (Rab3GAP) complex composed of RAB3GAP1 and RAB3GAP2, which has GTPase-activating protein (GAP) activity towards various Rab3 subfamily members (RAB3A, RAB3B, RAB3C and RAB3D), RAB5A and RAB43, and guanine nucleotide exchange factor (GEF) activity towards RAB18. As part of the Rab3GAP complex, acts as a GAP for Rab3 proteins by converting active RAB3-GTP to the inactive form RAB3-GDP. Rab3 proteins are involved in regulated exocytosis of neurotransmitters and hormones. The Rab3GAP complex, acts as a GEF for RAB18 by promoting the conversion of inactive RAB18-GDP to the active form RAB18-GTP. Recruits and stabilizes RAB18 at the cis-Golgi membrane in fibroblasts where RAB18 is most likely activated. Also involved in RAB18 recruitment at the endoplasmic reticulum (ER) membrane where it maintains proper ER structure. Required for normal eye and brain development. May participate in neurodevelopmental processes such as proliferation, migration and differentiation before synapse formation, and non-synaptic vesicular release of neurotransmitters. The polypeptide is Rab3 GTPase-activating protein catalytic subunit (Homo sapiens (Human)).